A 209-amino-acid chain; its full sequence is MSIKYIASSKLPTPWGVFEMHGFEDSETGKEHVALTFGTLSPDAPILGRIHSECLTGDALFSLRCDCGFQLQTAMQNVAEEGQGFILYLRQEGRGIGLLNKIRAYELQDQGANTVEANERLGFEADMRKYDMIIPMMEKIGVAKVRLMTNNPRKVKAMQSFGLEVVERVPLQVGKNRYNEGYLKTKSTELGHMMSEHHFTDADTEAKKD.

49–53 contacts GTP; the sequence is RIHSE. Positions 54, 65, and 67 each coordinate Zn(2+). Residues Gln70, 92–94, and Thr114 contribute to the GTP site; that span reads EGR. Residue Asp126 is the Proton acceptor of the active site. The active-site Nucleophile is Arg128. GTP contacts are provided by Thr149 and Lys154.

The protein belongs to the GTP cyclohydrolase II family. Requires Zn(2+) as cofactor.

The enzyme catalyses GTP + 4 H2O = 2,5-diamino-6-hydroxy-4-(5-phosphoribosylamino)-pyrimidine + formate + 2 phosphate + 3 H(+). It functions in the pathway cofactor biosynthesis; riboflavin biosynthesis; 5-amino-6-(D-ribitylamino)uracil from GTP: step 1/4. Its function is as follows. Catalyzes the conversion of GTP to 2,5-diamino-6-ribosylamino-4(3H)-pyrimidinone 5'-phosphate (DARP), formate and pyrophosphate. This chain is GTP cyclohydrolase-2, found in Shewanella halifaxensis (strain HAW-EB4).